Here is an 842-residue protein sequence, read N- to C-terminus: Elongation factor 2 (842 aa).

A tr-type G domain is found at 17–253; that stretch reads TNVRNMSVIA…LWGDSYFNPK (237 aa). GTP is bound by residues 26 to 33, 158 to 161, and 213 to 215; these read AHVDHGKS, NKVD, and SGL. His699 bears the Diphthamide mark.

This sequence belongs to the TRAFAC class translation factor GTPase superfamily. Classic translation factor GTPase family. EF-G/EF-2 subfamily.

The protein localises to the cytoplasm. The enzyme catalyses GTP + H2O = GDP + phosphate + H(+). Its function is as follows. Catalyzes the GTP-dependent ribosomal translocation step during translation elongation. During this step, the ribosome changes from the pre-translocational (PRE) to the post-translocational (POST) state as the newly formed A-site-bound peptidyl-tRNA and P-site-bound deacylated tRNA move to the P and E sites, respectively. Catalyzes the coordinated movement of the two tRNA molecules, the mRNA and conformational changes in the ribosome. The sequence is that of Elongation factor 2 (EFT1) from Komagataella pastoris (Yeast).